The primary structure comprises 217 residues: Ribose-5-phosphate isomerase A (217 aa).

Substrate-binding positions include 28 to 31 (TGST), 81 to 84 (DGAD), and 94 to 97 (KGGG). E103 serves as the catalytic Proton acceptor. Substrate is bound at residue K121.

The protein belongs to the ribose 5-phosphate isomerase family. As to quaternary structure, homodimer.

It carries out the reaction aldehydo-D-ribose 5-phosphate = D-ribulose 5-phosphate. It participates in carbohydrate degradation; pentose phosphate pathway; D-ribose 5-phosphate from D-ribulose 5-phosphate (non-oxidative stage): step 1/1. Its function is as follows. Catalyzes the reversible conversion of ribose-5-phosphate to ribulose 5-phosphate. The protein is Ribose-5-phosphate isomerase A of Aeromonas hydrophila subsp. hydrophila (strain ATCC 7966 / DSM 30187 / BCRC 13018 / CCUG 14551 / JCM 1027 / KCTC 2358 / NCIMB 9240 / NCTC 8049).